Here is a 332-residue protein sequence, read N- to C-terminus: Very-long-chain 3-oxoacyl-CoA reductase (332 aa).

Residues 15-35 (GQWALAGIGALYVATRVGAFL) form a helical membrane-spanning segment. NADP(+) contacts are provided by valine 60, aspartate 115, aspartate 123, asparagine 142, lysine 177, tyrosine 209, lysine 213, valine 242, and threonine 244. Catalysis depends on tyrosine 209, which acts as the Proton donor. Lysine 213 serves as the catalytic Lowers pKa of active site Tyr.

The protein belongs to the short-chain dehydrogenases/reductases (SDR) family.

The protein localises to the endoplasmic reticulum membrane. It catalyses the reaction a very-long-chain (3R)-3-hydroxyacyl-CoA + NADP(+) = a very-long-chain 3-oxoacyl-CoA + NADPH + H(+). It participates in lipid metabolism; fatty acid biosynthesis. Functionally, component of the microsomal membrane bound fatty acid elongation system, which produces the 26-carbon very long-chain fatty acids (VLCFA) from palmitate. Catalyzes the reduction of the 3-ketoacyl-CoA intermediate that is formed in each cycle of fatty acid elongation. VLCFAs serve as precursors for ceramide and sphingolipids. The polypeptide is Very-long-chain 3-oxoacyl-CoA reductase (Neurospora crassa (strain ATCC 24698 / 74-OR23-1A / CBS 708.71 / DSM 1257 / FGSC 987)).